A 107-amino-acid polypeptide reads, in one-letter code: ATP synthase peripheral stalk subunit F6, mitochondrial (107 aa).

The N-terminal 31 residues, 1–31, are a transit peptide targeting the mitochondrion; sequence MILQRLFRFSVIRSAVSVYLRRNIGVTAVAF. Lys40, Lys45, and Lys78 each carry N6-acetyllysine. N6-acetyllysine; alternate is present on residues Lys93 and Lys98. N6-succinyllysine; alternate occurs at positions 93 and 98. Lys104 is modified (N6-acetyllysine).

The protein belongs to the eukaryotic ATPase subunit F6 family. In terms of assembly, component of the ATP synthase complex composed at least of ATP5F1A/subunit alpha, ATP5F1B/subunit beta, ATP5MC1/subunit c (homooctomer), MT-ATP6/subunit a, MT-ATP8/subunit 8, ATP5ME/subunit e, ATP5MF/subunit f, ATP5MG/subunit g, ATP5MK/subunit k, ATP5MJ/subunit j, ATP5F1C/subunit gamma, ATP5F1D/subunit delta, ATP5F1E/subunit epsilon, ATP5PF/subunit F6, ATP5PB/subunit b, ATP5PD/subunit d, ATP5PO/subunit OSCP. ATP synthase complex consists of a soluble F(1) head domain (subunits alpha(3) and beta(3)) - the catalytic core - and a membrane F(0) domain - the membrane proton channel (subunits c, a, 8, e, f, g, k and j). These two domains are linked by a central stalk (subunits gamma, delta, and epsilon) rotating inside the F1 region and a stationary peripheral stalk (subunits F6, b, d, and OSCP).

The protein resides in the mitochondrion. The protein localises to the mitochondrion inner membrane. Its function is as follows. Subunit F6, of the mitochondrial membrane ATP synthase complex (F(1)F(0) ATP synthase or Complex V) that produces ATP from ADP in the presence of a proton gradient across the membrane which is generated by electron transport complexes of the respiratory chain. ATP synthase complex consist of a soluble F(1) head domain - the catalytic core - and a membrane F(1) domain - the membrane proton channel. These two domains are linked by a central stalk rotating inside the F(1) region and a stationary peripheral stalk. During catalysis, ATP synthesis in the catalytic domain of F(1) is coupled via a rotary mechanism of the central stalk subunits to proton translocation. In vivo, can only synthesize ATP although its ATP hydrolase activity can be activated artificially in vitro. Part of the complex F(0) domain. Part of the complex F(0) domain and the peripheric stalk, which acts as a stator to hold the catalytic alpha(3)beta(3) subcomplex and subunit a/ATP6 static relative to the rotary elements. This chain is ATP synthase peripheral stalk subunit F6, mitochondrial, found in Pongo abelii (Sumatran orangutan).